The chain runs to 499 residues: Glycerol kinase (499 aa).

ADP is bound at residue Thr-12. 3 residues coordinate ATP: Thr-12, Thr-13, and Ser-14. A sn-glycerol 3-phosphate-binding site is contributed by Thr-12. Arg-16 serves as a coordination point for ADP. 4 residues coordinate sn-glycerol 3-phosphate: Arg-82, Glu-83, Tyr-134, and Asp-243. 5 residues coordinate glycerol: Arg-82, Glu-83, Tyr-134, Asp-243, and Gln-244. 2 residues coordinate ADP: Thr-265 and Gly-308. 4 residues coordinate ATP: Thr-265, Gly-308, Gln-312, and Gly-411. Residue Gly-411 coordinates ADP.

The protein belongs to the FGGY kinase family.

It carries out the reaction glycerol + ATP = sn-glycerol 3-phosphate + ADP + H(+). It participates in polyol metabolism; glycerol degradation via glycerol kinase pathway; sn-glycerol 3-phosphate from glycerol: step 1/1. Inhibited by fructose 1,6-bisphosphate (FBP). Its function is as follows. Key enzyme in the regulation of glycerol uptake and metabolism. Catalyzes the phosphorylation of glycerol to yield sn-glycerol 3-phosphate. The chain is Glycerol kinase from Agrobacterium fabrum (strain C58 / ATCC 33970) (Agrobacterium tumefaciens (strain C58)).